A 332-amino-acid polypeptide reads, in one-letter code: Glucokinase (332 aa).

15-20 (ADIGGT) provides a ligand contact to ATP.

This sequence belongs to the bacterial glucokinase family.

The protein resides in the cytoplasm. It catalyses the reaction D-glucose + ATP = D-glucose 6-phosphate + ADP + H(+). This chain is Glucokinase, found in Campylobacter jejuni subsp. doylei (strain ATCC BAA-1458 / RM4099 / 269.97).